The primary structure comprises 356 residues: MSQQNTVEGGFDLSSGVSDKKEWVFNLQEVIPTGHKRTVRSVAWSPNGEVLATASFDSTVGLWERIPENIRAEEGSDGPEWECFGTLEGHDSECKSVAFSYNGNLLASCGRDKSVWVWEAQPDADYECIGVLIEHSQDVKCVIWHPKEEILASASYDNTIKMYVDDPSCDWYCYTTLQAHSSTVWSLSFSPCGQFLASSSDDMTIWIWRRVSAAECVELGIQAHGNTPGRSGERWVPTYCIQGHFSGPIFSVNWAPGDSFDPRQALGKLVAAGADGKIIVFFLVRIYATLRGTYACAQSLEDNNPSRIFVHVGAQEENAHGSVDVNCVKWAPMNTDGSAPTMIASAGDDGEIRIWT.

6 WD repeats span residues 34–73 (GHKR…IRAE), 89–128 (GHDS…DYEC), 134–173 (EHSQ…DWYC), 179–218 (AHSS…ECVE), 244–291 (HFSG…ATLR), and 319–356 (AHGS…RIWT).

Belongs to the WD repeat CIA1 family.

Functionally, essential component of the cytosolic iron-sulfur (Fe/S) protein assembly machinery. Required for the maturation of extramitochondrial Fe/S proteins. The polypeptide is Probable cytosolic iron-sulfur protein assembly protein 1 (Malassezia globosa (strain ATCC MYA-4612 / CBS 7966) (Dandruff-associated fungus)).